Here is a 378-residue protein sequence, read N- to C-terminus: Ribosomal RNA large subunit methyltransferase G (378 aa).

The protein belongs to the methyltransferase superfamily. RlmG family.

It localises to the cytoplasm. The enzyme catalyses guanosine(1835) in 23S rRNA + S-adenosyl-L-methionine = N(2)-methylguanosine(1835) in 23S rRNA + S-adenosyl-L-homocysteine + H(+). Functionally, specifically methylates the guanine in position 1835 (m2G1835) of 23S rRNA. The polypeptide is Ribosomal RNA large subunit methyltransferase G (Shewanella sp. (strain W3-18-1)).